The sequence spans 346 residues: Guanine nucleotide-binding protein subunit beta-2 (346 aa).

WD repeat units follow at residues 57–96 (GHIN…KVQV), 99–138 (LRSA…ASGV), 147–185 (GYEG…KTMD), 188–227 (GHAG…HKQM), 230–269 (GHEM…QIAL), 274–313 (QKNT…HNGM), and 316–346 (GHEN…RLWL).

Belongs to the WD repeat G protein beta family. In terms of assembly, g proteins are composed of 3 units, alpha, beta and gamma. Interacts with Ggammae/Guanine nucleotide-binding protein subunit gamma-e.

Guanine nucleotide-binding proteins (G proteins) are involved as modulators or transducers in various transmembrane signaling systems. The beta and gamma chains are required for the GTPase activity, for replacement of GDP by GTP, and for G protein-effector interaction. The chain is Guanine nucleotide-binding protein subunit beta-2 from Calliphora vicina (Blue blowfly).